The following is a 495-amino-acid chain: MHPINAVVAARMLAGISQSNALQSEAIPFGSLEWITYAGISCFLVLFAGIMSGLTLGLMSLGLVELEILQRSGTPKEKKQSAAIFPVVQKQHQLLVTLLLFNALAMEGLPIYLDKIFNEYVAIILSVTFVLFVGEVIPQAICTRYGLAVGANLVWLVRILMVLSYPISFPIAKMLDWVLGHNDPLFRRAQLKALVSIHGEAAGKGGELTHDETTIISGALDLTEKTAQEAMTPIESTFSLDVNSKLDREAMDKIQARGHSRVPVYSDNPKNVIGLLLVKSLLTVRPETGTLVSAVGIRRIPRVPANMPLYDILNEFQKGSSHMAAVVKVKGKSKGHPSTLHEENSGESNVSSNNSELTAPLLLKREGNHDSVIVRIDKANGQSFISEAGRQGFSHTSEEIEDGDVIGIITLEDVFEELLQEEIVDETDEYIDVHKRIRVATVAAVAISSLARAPSGRRLLGPKGSGGPKTPKASSTPKPDDKLMGTMTGPPQGNN.

Residues 1-42 (MHPINAVVAARMLAGISQSNALQSEAIPFGSLEWITYAGISC) are Extracellular-facing. The CNNM transmembrane domain maps to 30 to 212 (GSLEWITYAG…GKGGELTHDE (183 aa)). The helical transmembrane segment at 43–63 (FLVLFAGIMSGLTLGLMSLGL) threads the bilayer. Topologically, residues 64–92 (VELEILQRSGTPKEKKQSAAIFPVVQKQH) are cytoplasmic. A helical transmembrane segment spans residues 93–113 (QLLVTLLLFNALAMEGLPIYL). Residues 114-120 (DKIFNEY) lie on the Extracellular side of the membrane. Residues 121–141 (VAIILSVTFVLFVGEVIPQAI) traverse the membrane as a helical segment. Residues 142–146 (CTRYG) lie on the Cytoplasmic side of the membrane. Residues 147 to 167 (LAVGANLVWLVRILMVLSYPI) form a helical membrane-spanning segment. Residues 168-495 (SFPIAKMLDW…TMTGPPQGNN (328 aa)) lie on the Extracellular side of the membrane. CBS domains are found at residues 231–291 (MTPI…TGTL), 296–356 (GIRR…NNSE), and 357–426 (LTAP…IVDE). Residues 330 to 354 (KGKSKGHPSTLHEENSGESNVSSNN) form a disordered region. Asparagine 349 carries N-linked (GlcNAc...) asparagine glycosylation. Serine 352 carries the post-translational modification Phosphoserine. Asparagine 353 carries an N-linked (GlcNAc...) asparagine glycan. The tract at residues 455-495 (SGRRLLGPKGSGGPKTPKASSTPKPDDKLMGTMTGPPQGNN) is disordered. The segment covering 456 to 477 (GRRLLGPKGSGGPKTPKASSTP) has biased composition (low complexity).

It is found in the membrane. This is DUF21 domain-containing protein At4g14230 (CBSDUF2) from Arabidopsis thaliana (Mouse-ear cress).